Here is a 197-residue protein sequence, read N- to C-terminus: Dephospho-CoA kinase (197 aa).

The DPCK domain occupies 2 to 197 (IIGLTGGIAS…GAIKDLANLV (196 aa)). 10–15 (ASGKST) contributes to the ATP binding site.

The protein belongs to the CoaE family.

It localises to the cytoplasm. The catalysed reaction is 3'-dephospho-CoA + ATP = ADP + CoA + H(+). It participates in cofactor biosynthesis; coenzyme A biosynthesis; CoA from (R)-pantothenate: step 5/5. In terms of biological role, catalyzes the phosphorylation of the 3'-hydroxyl group of dephosphocoenzyme A to form coenzyme A. The polypeptide is Dephospho-CoA kinase (Streptococcus thermophilus (strain ATCC BAA-250 / LMG 18311)).